The chain runs to 514 residues: Cytochrome P450 monooxygenase ptmQ (514 aa).

The chain crosses the membrane as a helical span at residues 3-23 (YVAQSPWIATLIVTATTYCTL). The N-linked (GlcNAc...) asparagine glycan is linked to asparagine 148. Residue cysteine 452 coordinates heme. N-linked (GlcNAc...) asparagine glycosylation is present at asparagine 486.

It belongs to the cytochrome P450 family. Requires heme as cofactor.

The protein resides in the membrane. Its pathway is secondary metabolite biosynthesis. Its function is as follows. Cytochrome P450 monooxygenase; part of the gene cluster that mediates the biosynthesis of the indole diterpenes penitrems. The geranylgeranyl diphosphate (GGPP) synthase ptmG catalyzes the first step in penitrem biosynthesis via conversion of farnesyl pyrophosphate and isopentyl pyrophosphate into geranylgeranyl pyrophosphate (GGPP). Condensation of indole-3-glycerol phosphate with GGPP by the prenyl transferase ptmC then forms 3-geranylgeranylindole (3-GGI). Epoxidation by the FAD-dependent monooxygenase ptmM leads to a epoxidized-GGI that is substrate of the terpene cyclase ptmB for cyclization to yield paspaline. Paspaline is subsequently converted to 13-desoxypaxilline by the cytochrome P450 monooxygenase ptmP, the latter being then converted to paxilline by the cytochrome P450 monooxygenase ptmQ. Paxilline is converted to beta-paxitriol via C-10 ketoreduction by the short-chain dehydrogenase ptmH which can be monoprenylated at the C-20 by the indole diterpene prenyltransferase ptmD. A two-step elimination (acetylation and elimination) process performed by the O-acetyltransferase ptmV and ptmI leads to the production of the prenylated form of penijanthine. The FAD-linked oxidoreductase ptmO then converts the prenylated form of penijanthine into PC-M5 which is in turn transformed into PC-M4 by the aromatic dimethylallyltransferase ptmE. Five sequential oxidative transformations performed by the cytochrome P450 monooxygenases ptmK, ptmU, ptmL, ptmN and ptmJ yield the various penitrem compounds. PtmK, ptmU and ptmM are involved in the formation of the key bicyclic ring of penitrem C via the formation of the intermediates secopenitrem D and penitrem D. PtmL catalyzes the epoxidation of penitrem D and C to yield penitrem B and F, respectively. PtmJ catalyzes the last benzylic hydroxylation to convert penitrem B to prenitrem E and penitrem F to penitrem A. This Penicillium ochrochloron protein is Cytochrome P450 monooxygenase ptmQ.